Reading from the N-terminus, the 416-residue chain is Glutamyl-tRNA reductase (416 aa).

Substrate is bound by residues 50–53, S109, 114–116, and Q120; these read TCNR and EPQ. C51 serves as the catalytic Nucleophile. An NADP(+)-binding site is contributed by 189–194; it reads GAGEMI.

This sequence belongs to the glutamyl-tRNA reductase family. Homodimer.

It catalyses the reaction (S)-4-amino-5-oxopentanoate + tRNA(Glu) + NADP(+) = L-glutamyl-tRNA(Glu) + NADPH + H(+). It functions in the pathway porphyrin-containing compound metabolism; protoporphyrin-IX biosynthesis; 5-aminolevulinate from L-glutamyl-tRNA(Glu): step 1/2. Its function is as follows. Catalyzes the NADPH-dependent reduction of glutamyl-tRNA(Glu) to glutamate 1-semialdehyde (GSA). In Ruthia magnifica subsp. Calyptogena magnifica, this protein is Glutamyl-tRNA reductase.